A 142-amino-acid polypeptide reads, in one-letter code: Hemoglobin subunit alpha (142 aa).

In terms of domain architecture, Globin spans 2 to 142; that stretch reads VLSDADKTHV…VATVLTSKYR (141 aa). Residue Ser-4 is modified to Phosphoserine. Lys-8 carries the post-translational modification N6-succinyllysine. Thr-9 is modified (phosphothreonine). The residue at position 12 (Lys-12) is an N6-succinyllysine. Residue Lys-17 is modified to N6-acetyllysine; alternate. Lys-17 carries the N6-succinyllysine; alternate modification. Tyr-25 bears the Phosphotyrosine mark. Ser-36 is subject to Phosphoserine. N6-succinyllysine is present on Lys-41. Residue Ser-50 is modified to Phosphoserine. Residue His-59 participates in O2 binding. Residue His-88 participates in heme b binding. Phosphoserine is present on Ser-103. Residue Thr-109 is modified to Phosphothreonine. 2 positions are modified to phosphoserine: Ser-125 and Ser-132. A phosphothreonine mark is found at Thr-135 and Thr-138. Phosphoserine is present on Ser-139.

The protein belongs to the globin family. In terms of assembly, heterotetramer of two alpha chains and two beta chains. In terms of tissue distribution, red blood cells.

Involved in oxygen transport from the lung to the various peripheral tissues. Functionally, hemopressin acts as an antagonist peptide of the cannabinoid receptor CNR1. Hemopressin-binding efficiently blocks cannabinoid receptor CNR1 and subsequent signaling. This Dasyurus viverrinus (Eastern quoll) protein is Hemoglobin subunit alpha (HBA).